A 275-amino-acid polypeptide reads, in one-letter code: Lectin (275 aa).

A signal peptide spans 1-30; the sequence is MASLQTQMISFYLIFLSILLTTIFFFKVNS. Positions 111 and 129 each coordinate D-glucose. Residues Glu-149 and Asp-151 each contribute to the Mn(2+) site. Residues Asp-151, Phe-153, Asn-155, and Asp-159 each coordinate Ca(2+). Positions 159 and 166 each coordinate Mn(2+). A propeptide spanning residues 211–217 is cleaved from the precursor; that stretch reads NSLEEEN. The D-glucose site is built by Gly-246 and Ala-247. A propeptide spanning residues 270–275 is cleaved from the precursor; that stretch reads KQAADA.

This sequence belongs to the leguminous lectin family. As to quaternary structure, heterotetramer of two alpha and two beta chains. In terms of processing, the mature form consists of two chains, alpha and beta, produced by cleavage of the immature protein. These remain cleaved, yet fold together to form one subunit.

D-mannose specific lectin. The polypeptide is Lectin (Lens culinaris subsp. culinaris (Cultivated lentil)).